Reading from the N-terminus, the 133-residue chain is Small ribosomal subunit protein bS16 (133 aa).

The disordered stretch occupies residues E99–A133. Residues R109 to K123 show a composition bias toward basic residues. The span at K124 to A133 shows a compositional bias: basic and acidic residues.

It belongs to the bacterial ribosomal protein bS16 family.

The polypeptide is Small ribosomal subunit protein bS16 (Chlorobium limicola (strain DSM 245 / NBRC 103803 / 6330)).